Reading from the N-terminus, the 114-residue chain is MSYISGARLVADEQVRIASTKMDGIGPKKAIQVRSRLGGNIKRKELTKYQIDQIEQMRGQDHVVHWELKRGERADIERFISISCYRGIRHQDGLPLRGQRSHTNARTSRKRIRK.

The disordered stretch occupies residues 92-114; that stretch reads DGLPLRGQRSHTNARTSRKRIRK.

Belongs to the universal ribosomal protein uS13 family. In terms of assembly, part of the small ribosomal subunit.

It is found in the mitochondrion. Functionally, located at the top of the head of the small subunit, it contacts several helices of the 18S rRNA. This is Small ribosomal subunit protein uS13m (RPS13) from Oenothera berteroana (Bertero's evening primrose).